We begin with the raw amino-acid sequence, 197 residues long: Beta-crystallin A2 (197 aa).

The interval 1 to 11 (MSSAPAPGSAP) is N-terminal arm. Beta/gamma crystallin 'Greek key' domains follow at residues 12–52 (VCLT…KVEN) and 53–99 (GAWV…RPVL). Residues 100 to 105 (CANHSD) form a connecting peptide region. 2 consecutive Beta/gamma crystallin 'Greek key' domains span residues 106–147 (SRVT…KVSS) and 148–196 (GAWV…RRVQ).

The protein belongs to the beta/gamma-crystallin family. As to quaternary structure, homo/heterodimer, or complexes of higher-order. The structure of beta-crystallin oligomers seems to be stabilized through interactions between the N-terminal arms.

Crystallins are the dominant structural components of the vertebrate eye lens. The polypeptide is Beta-crystallin A2 (Cryba2) (Mus musculus (Mouse)).